Consider the following 542-residue polypeptide: CTP synthase (542 aa).

The interval 1–269 (MQTKYIFITG…DALICELLHL (269 aa)) is amidoligase domain. S14 contacts CTP. S14 lines the UTP pocket. ATP contacts are provided by residues 15-20 (SLGKGL) and D72. D72 and E143 together coordinate Mg(2+). CTP-binding positions include 150–152 (DIE), 189–194 (KTKPSQ), and K225. Residues 189–194 (KTKPSQ) and K225 each bind UTP. Residue 241 to 243 (KDV) participates in ATP binding. One can recognise a Glutamine amidotransferase type-1 domain in the interval 301 to 538 (YVQHQDAYKS…IQAMIIYHKS (238 aa)). L-glutamine is bound at residue G358. C385 functions as the Nucleophile; for glutamine hydrolysis in the catalytic mechanism. Residues 386–389 (LGMQ), E409, and R466 contribute to the L-glutamine site. Catalysis depends on residues H511 and E513.

The protein belongs to the CTP synthase family. Homotetramer.

It carries out the reaction UTP + L-glutamine + ATP + H2O = CTP + L-glutamate + ADP + phosphate + 2 H(+). The enzyme catalyses L-glutamine + H2O = L-glutamate + NH4(+). The catalysed reaction is UTP + NH4(+) + ATP = CTP + ADP + phosphate + 2 H(+). Its pathway is pyrimidine metabolism; CTP biosynthesis via de novo pathway; CTP from UDP: step 2/2. With respect to regulation, allosterically activated by GTP, when glutamine is the substrate; GTP has no effect on the reaction when ammonia is the substrate. The allosteric effector GTP functions by stabilizing the protein conformation that binds the tetrahedral intermediate(s) formed during glutamine hydrolysis. Inhibited by the product CTP, via allosteric rather than competitive inhibition. In terms of biological role, catalyzes the ATP-dependent amination of UTP to CTP with either L-glutamine or ammonia as the source of nitrogen. Regulates intracellular CTP levels through interactions with the four ribonucleotide triphosphates. The polypeptide is CTP synthase (Protochlamydia amoebophila (strain UWE25)).